A 266-amino-acid polypeptide reads, in one-letter code: Bax inhibitor 1 (266 aa).

A disordered region spans residues 1–22 (MPANYQSVPQDDPSVPNLAQAP). The next 7 membrane-spanning stretches (helical) occupy residues 70–90 (LFVT…SFWV), 92–112 (MHPW…FGLI), 123–143 (IFLF…ITFF), 147–167 (IILE…AFTF), 177–197 (GGFL…FFFV), 201–221 (PFID…YILF), and 240–260 (LMLY…LGML).

Belongs to the BI1 family. LFG subfamily.

The protein localises to the endoplasmic reticulum membrane. Its subcellular location is the mitochondrion membrane. It localises to the golgi apparatus membrane. The protein resides in the vacuole membrane. Functionally, links the unfolded protein response and programmed cell death and mediates mitochondrial-dependent apoptosis. Induces cell death and disruption of the mitochondrial transmembrane potential. This is Bax inhibitor 1 (bxi1) from Schizosaccharomyces pombe (strain 972 / ATCC 24843) (Fission yeast).